Here is a 32-residue protein sequence, read N- to C-terminus: ilv operon leader peptide (32 aa).

This Yersinia pestis protein is ilv operon leader peptide (ilvL).